The primary structure comprises 462 residues: L-seryl-tRNA(Sec) selenium transferase (462 aa).

Lysine 292 bears the N6-(pyridoxal phosphate)lysine mark.

The protein belongs to the SelA family. It depends on pyridoxal 5'-phosphate as a cofactor.

It localises to the cytoplasm. The catalysed reaction is L-seryl-tRNA(Sec) + selenophosphate + H(+) = L-selenocysteinyl-tRNA(Sec) + phosphate. The protein operates within aminoacyl-tRNA biosynthesis; selenocysteinyl-tRNA(Sec) biosynthesis; selenocysteinyl-tRNA(Sec) from L-seryl-tRNA(Sec) (bacterial route): step 1/1. Converts seryl-tRNA(Sec) to selenocysteinyl-tRNA(Sec) required for selenoprotein biosynthesis. In Geobacter sulfurreducens (strain ATCC 51573 / DSM 12127 / PCA), this protein is L-seryl-tRNA(Sec) selenium transferase.